The chain runs to 386 residues: Putative 8-amino-7-oxononanoate synthase 2 (386 aa).

Arginine 21 provides a ligand contact to substrate. 104–105 (GY) lines the pyridoxal 5'-phosphate pocket. Residue histidine 129 participates in substrate binding. Residues serine 176, 201–204 (DDAH), and 230–233 (TLSK) contribute to the pyridoxal 5'-phosphate site. Lysine 233 carries the N6-(pyridoxal phosphate)lysine modification.

It belongs to the class-II pyridoxal-phosphate-dependent aminotransferase family. BioF subfamily. Homodimer. Pyridoxal 5'-phosphate serves as cofactor.

It catalyses the reaction 6-carboxyhexanoyl-[ACP] + L-alanine + H(+) = (8S)-8-amino-7-oxononanoate + holo-[ACP] + CO2. It functions in the pathway cofactor biosynthesis; biotin biosynthesis. In terms of biological role, catalyzes the decarboxylative condensation of pimeloyl-[acyl-carrier protein] and L-alanine to produce 8-amino-7-oxononanoate (AON), [acyl-carrier protein], and carbon dioxide. The protein is Putative 8-amino-7-oxononanoate synthase 2 (bioF) of Bacillus velezensis (strain DSM 23117 / BGSC 10A6 / LMG 26770 / FZB42) (Bacillus amyloliquefaciens subsp. plantarum).